The sequence spans 318 residues: Ribonuclease Z (318 aa).

Residues H62, H64, D66, H67, H140, D211, and H269 each coordinate Zn(2+). D66 functions as the Proton acceptor in the catalytic mechanism.

Belongs to the RNase Z family. Homodimer. It depends on Zn(2+) as a cofactor.

It carries out the reaction Endonucleolytic cleavage of RNA, removing extra 3' nucleotides from tRNA precursor, generating 3' termini of tRNAs. A 3'-hydroxy group is left at the tRNA terminus and a 5'-phosphoryl group is left at the trailer molecule.. Zinc phosphodiesterase, which displays some tRNA 3'-processing endonuclease activity. Probably involved in tRNA maturation, by removing a 3'-trailer from precursor tRNA. This chain is Ribonuclease Z, found in Brevibacillus brevis (strain 47 / JCM 6285 / NBRC 100599).